Consider the following 142-residue polypeptide: Hemoglobin subunit alpha (142 aa).

Ser1 is modified (N-acetylserine). One can recognise a Globin domain in the interval 1–142; sequence SLSDKDKADV…LALALGQKYR (142 aa). Position 58 (His58) interacts with O2. Position 88 (His88) interacts with heme b.

The protein belongs to the globin family. As to quaternary structure, heterotetramer of two alpha chains and two beta chains. In terms of tissue distribution, red blood cells.

Functionally, involved in oxygen transport from gills to the various peripheral tissues. This is Hemoglobin subunit alpha (hba) from Catostomus clarkii (Desert sucker).